The following is a 348-amino-acid chain: Dihydroorotase (348 aa).

The Zn(2+) site is built by His17 and His19. Substrate contacts are provided by residues 19 to 21 (HLR) and Asn45. The Zn(2+) site is built by Lys103, His140, and His178. The residue at position 103 (Lys103) is an N6-carboxylysine. His140 contributes to the substrate binding site. Leu223 serves as a coordination point for substrate. Asp251 is a binding site for Zn(2+). Asp251 is a catalytic residue. Residues His255 and Ala267 each contribute to the substrate site.

Belongs to the metallo-dependent hydrolases superfamily. DHOase family. Class II DHOase subfamily. As to quaternary structure, homodimer. Requires Zn(2+) as cofactor.

It carries out the reaction (S)-dihydroorotate + H2O = N-carbamoyl-L-aspartate + H(+). Its pathway is pyrimidine metabolism; UMP biosynthesis via de novo pathway; (S)-dihydroorotate from bicarbonate: step 3/3. Its function is as follows. Catalyzes the reversible cyclization of carbamoyl aspartate to dihydroorotate. This is Dihydroorotase from Escherichia coli O17:K52:H18 (strain UMN026 / ExPEC).